A 164-amino-acid polypeptide reads, in one-letter code: 17.8 kDa class II heat shock protein (164 aa).

The 117-residue stretch at 48-164 (DARAMAATPA…KPKTIEVKVA (117 aa)) folds into the sHSP domain.

The protein belongs to the small heat shock protein (HSP20) family.

It is found in the cytoplasm. This Zea mays (Maize) protein is 17.8 kDa class II heat shock protein.